A 312-amino-acid polypeptide reads, in one-letter code: MLIGVSGTKFCGCEDVINMLVDHFHFELLNHLDNPEEILDYATKNYTKNSVIFLEKLSLLEKLEKRPFFVHLSIDAPVTTRVALYRKTTQAESLSLEQIIQAIDQHDFQPEGIKLREKSHLRFKIVNEDRRGRRQSLINNITTQLKILDDKEKQMAPLMRPSWDSYFMKLATLAASRSNCMKRRVGCVIVRECRVIATGYNGTPRHLTNCFNGGCPRCNDGDSRNLHTCLCLHAEENALLEAGRDRVGQNATLYCDTCPCLTCSVKIVQTGISEVVYSQSYRMDEESFKVLKNAGITVRQFSFTEEPRIVMI.

The CMP/dCMP-type deaminase domain occupies 162–291 (SWDSYFMKLA…RMDEESFKVL (130 aa)). His-233 provides a ligand contact to Zn(2+). The active-site Proton donor is Glu-235. Cys-260 and Cys-263 together coordinate Zn(2+).

It belongs to the cytidine and deoxycytidylate deaminase family. Zn(2+) is required as a cofactor.

The enzyme catalyses dCMP + H2O + H(+) = dUMP + NH4(+). Its activity is regulated as follows. Allosteric enzyme whose activity is greatly influenced by the end products of its metabolic pathway, dCTP and dTTP. Its function is as follows. Catalyzes the hydrolytic deamination of dCMP to yield dUMP, the nucleotide substrate for thymidylate synthetase. The sequence is that of Deoxycytidylate deaminase from Saccharomyces cerevisiae (strain ATCC 204508 / S288c) (Baker's yeast).